The primary structure comprises 60 residues: Myrmicitoxin(1)-Pr4c (60 aa).

The N-terminal stretch at 1–23 (MKAIIFLFAVLTVVAIIIPIISG) is a signal peptide. Residues 24 to 33 (EPNAGPHAAS) constitute a propeptide that is removed on maturation. Glutamine 59 is modified (glutamine amide).

Belongs to the formicidae venom clade 2 family. Expressed by the venom gland.

It is found in the secreted. Toxin that causes a rapid and irreversible paralysis when intrathoracically injected into insects (blowflies). Does not cause spontaneous nocifensive behaviors by intraplantar injection in mice. This is Myrmicitoxin(1)-Pr4c from Pogonomyrmex rugosus (Desert harvester ant).